We begin with the raw amino-acid sequence, 145 residues long: D-aminoacyl-tRNA deacylase (145 aa).

Positions 137 to 138 (GP) match the Gly-cisPro motif, important for rejection of L-amino acids motif.

This sequence belongs to the DTD family. In terms of assembly, homodimer.

It is found in the cytoplasm. The catalysed reaction is glycyl-tRNA(Ala) + H2O = tRNA(Ala) + glycine + H(+). The enzyme catalyses a D-aminoacyl-tRNA + H2O = a tRNA + a D-alpha-amino acid + H(+). An aminoacyl-tRNA editing enzyme that deacylates mischarged D-aminoacyl-tRNAs. Also deacylates mischarged glycyl-tRNA(Ala), protecting cells against glycine mischarging by AlaRS. Acts via tRNA-based rather than protein-based catalysis; rejects L-amino acids rather than detecting D-amino acids in the active site. By recycling D-aminoacyl-tRNA to D-amino acids and free tRNA molecules, this enzyme counteracts the toxicity associated with the formation of D-aminoacyl-tRNA entities in vivo and helps enforce protein L-homochirality. The sequence is that of D-aminoacyl-tRNA deacylase from Rhodococcus opacus (strain B4).